Consider the following 116-residue polypeptide: Large ribosomal subunit protein bL19 (116 aa).

It belongs to the bacterial ribosomal protein bL19 family.

In terms of biological role, this protein is located at the 30S-50S ribosomal subunit interface and may play a role in the structure and function of the aminoacyl-tRNA binding site. The protein is Large ribosomal subunit protein bL19 of Staphylococcus saprophyticus subsp. saprophyticus (strain ATCC 15305 / DSM 20229 / NCIMB 8711 / NCTC 7292 / S-41).